The following is a 184-amino-acid chain: MEGKIKIGPVGTDYSGKKTMVDWDEGSHNGIISQIFLSHGPTGVFSIQFQFMLDDTFFLSSCHGQNTGSMFDVILLNCPHEYITGISGEYLKSDGASGPQIRSLAFATNLNQYGPFGGSSSQSSIWNHEQQFRFKLGKFRQFSGFYGTYNASGLQNIGVYLQPTIVKPTGTRNAEETESNIVLG.

Residues 4–163 (KIKIGPVGTD…LQNIGVYLQP (160 aa)) enclose the Jacalin-type lectin domain.

The protein belongs to the jacalin lectin family.

The chain is Jacalin-related lectin 2 (JAL2) from Arabidopsis thaliana (Mouse-ear cress).